A 437-amino-acid chain; its full sequence is Bile acid CoA-transferase BaiK (437 aa).

Residue Asp-171 is the Nucleophile of the active site.

It belongs to the CoA-transferase III family.

The enzyme catalyses deoxycholoyl-CoA + cholate = choloyl-CoA + deoxycholate. It catalyses the reaction allodeoxycholoyl-CoA + cholate = allodeoxycholate + choloyl-CoA. The catalysed reaction is allocholate + deoxycholoyl-CoA = allocholoyl-CoA + deoxycholate. It carries out the reaction allocholate + allodeoxycholoyl-CoA = allocholoyl-CoA + allodeoxycholate. The enzyme catalyses ursodeoxycholate + deoxycholoyl-CoA = ursodeoxycholoyl-CoA + deoxycholate. It catalyses the reaction allodeoxycholoyl-CoA + ursodeoxycholate = ursodeoxycholoyl-CoA + allodeoxycholate. Its pathway is lipid metabolism; bile acid biosynthesis. In terms of biological role, functions in the bile acid 7alpha-dehydroxylation pathway, which forms secondary bile acids via the 7alpha-dehydroxylation of primary bile acids, and is carried out by intestinal anaerobic bacteria. Acts as a bile acid CoA transferase with broad bile acid substrate specificity. Catalyzes the transfer of the CoA moiety of secondary bile acid-CoA compounds to primary bile acids. Can use deoxycholoyl-CoA and allodeoxycholoyl-CoA as bile acid CoA donors and cholate, allocholate and ursodeoxycholate as bile acid CoA acceptors. Shows no activity when lithocholoyl-CoA is used as the CoA donor. The sequence is that of Bile acid CoA-transferase BaiK from Clostridium scindens (strain JCM 10418 / VPI 12708).